The chain runs to 306 residues: Peroxisome biogenesis factor 10 (306 aa).

Residues 1 to 52 (MHLSAHIDPLQIILCTEIDEACIQFIKSQIEGIARACGPRMQANFEGVLIPY) are Peroxisomal matrix-facing. Residues 53 to 84 (VDVLGKFLYRACCLRYATMGEEAARIVLAKQD) traverse the membrane as a helical segment. Residues 85-147 (RSKGLVLATT…PEAVISKEKH (63 aa)) are Cytoplasmic-facing. The chain crosses the membrane as a helical span at residues 148–174 (LVYILNSFKPILLKLVSIIRFLCLTMK). At 175-202 (GHCATVSQLLLGLKYISLDEINPEEKKK) the chain is on the peroxisomal matrix side. The chain crosses the membrane as a helical span at residues 203–219 (VLTLLLLLGSRLIASIL). The Cytoplasmic portion of the chain corresponds to 220-306 (QHSNSYFDQH…SSPSKIILLR (87 aa)). Zn(2+) contacts are provided by Cys-256, Cys-259, Cys-271, His-273, Cys-276, Cys-279, Cys-290, and Cys-293. Residues 256–294 (CSLCMEFIHCPAATECGHIFCWSCINGWTSKKSECPLCR) form an RING-type zinc finger.

The protein belongs to the pex2/pex10/pex12 family. As to quaternary structure, component of the PEX2-PEX10-PEX12 retrotranslocation channel, composed of PEX2, PEX10 and PEX12.

It is found in the peroxisome membrane. It catalyses the reaction S-ubiquitinyl-[E2 ubiquitin-conjugating enzyme]-L-cysteine + [acceptor protein]-L-lysine = [E2 ubiquitin-conjugating enzyme]-L-cysteine + N(6)-ubiquitinyl-[acceptor protein]-L-lysine.. It functions in the pathway protein modification; protein ubiquitination. The E3 ubiquitin-protein ligase activity is stimulated by PEX12. In terms of biological role, E3 ubiquitin-protein ligase component of a retrotranslocation channel required for peroxisome organization by mediating export of the PEX5 receptor from peroxisomes to the cytosol, thereby promoting PEX5 recycling. The retrotranslocation channel is composed of PEX2, PEX10 and PEX12; each subunit contributing transmembrane segments that coassemble into an open channel that specifically allows the passage of PEX5 through the peroxisomal membrane. PEX10 also regulates PEX5 recycling by acting as a E3 ubiquitin-protein ligase. When PEX5 recycling is compromised, PEX10 catalyzes polyubiquitination of PEX5 during its passage through the retrotranslocation channel, leading to its degradation. The protein is Peroxisome biogenesis factor 10 (pas4) of Schizosaccharomyces pombe (strain 972 / ATCC 24843) (Fission yeast).